We begin with the raw amino-acid sequence, 723 residues long: Cyclin-T2 (723 aa).

The segment at 1 to 298 (MASGRGASSR…SVTGVPANPS (298 aa)) is interaction with MDFIC and MDFI. Residues 12–147 (FFTREQLENT…IMLQTLGFEI (136 aa)) enclose the Cyclin N-terminal domain. The interaction with POLR2A stretch occupies residues 250-298 (RLKRIRNWRAMAKKPKVDGQVSETPLLGSSLVQNSILVDSVTGVPANPS). Polar residues-rich tracts occupy residues 297 to 307 (PSFQKPSTSTF) and 314 to 325 (NSGSTSVQDSRA). Disordered stretches follow at residues 297–325 (PSFQ…DSRA), 340–364 (SYSL…VYTQ), 385–428 (ALHS…GMLP), and 458–645 (AEQQ…SSVK). Residues 395–409 (DKVADHSSAKQEYTH) are compositionally biased toward basic and acidic residues. Residue K404 forms a Glycyl lysine isopeptide (Lys-Gly) (interchain with G-Cter in SUMO2) linkage. S477 is subject to Phosphoserine. Composition is skewed to basic and acidic residues over residues 489 to 503 (DRPE…ERSG), 517 to 543 (GPSK…EGSG), and 552 to 565 (ISRD…EHPA). A compositionally biased stretch (basic residues) spans 566 to 576 (NRHHSSHKYLH). Position 596 is a phosphoserine (S596). Residues 631–645 (SSKSAGSSSSSSSVK) show a composition bias toward low complexity.

It belongs to the cyclin family. Cyclin C subfamily. As to quaternary structure, interacts with CDK9 to form P-TEFb. Interacts with POLR2A (via the C-terminal domain (CTD)); mediates transcriptional activity. Interacts with HEXIM1; mediates formation of a tripartite complex with KPNA2. Interacts with HEXIM2. Interacts with PKN1; enhances MYOD1-dependent transcription. P-TEFB complex interacts with RB1; promotes phosphorylation of RB1. P-TEFB complex interacts with MYOD1; promotes the transcriptional activity of MYOD1 through its CDK9-mediated phosphorylation. Interacts with MDFI and MDFIC. As to expression, highly expressed in all phases of skeletal muscle differentiation, particularly in later stages. Highly expressed in skeletal muscle. Significantly expressed in heart, brain, kidney, liver, testis, and pancreas.

Its subcellular location is the cytoplasm. It is found in the perinuclear region. The protein resides in the nucleus. In terms of biological role, regulatory subunit of the cyclin-dependent kinase pair (CDK9/cyclin T) complex, also called positive transcription elongation factor B (P-TEFB), which is proposed to facilitate the transition from abortive to production elongation by phosphorylating the CTD (carboxy-terminal domain) of the large subunit of RNA polymerase II (RNAP II). The activity of this complex is regulated by binding with 7SK snRNA. Plays a role during muscle differentiation; P-TEFB complex interacts with MYOD1; this tripartite complex promotes the transcriptional activity of MYOD1 through its CDK9-mediated phosphorylation and binds the chromatin of promoters and enhancers of muscle-specific genes; this event correlates with hyperphosphorylation of the CTD domain of RNA pol II. In addition, enhances MYOD1-dependent transcription through interaction with PKN1. Involved in early embryo development. The sequence is that of Cyclin-T2 from Mus musculus (Mouse).